Consider the following 440-residue polypeptide: L-gulonolactone oxidase (440 aa).

In terms of domain architecture, FAD-binding PCMH-type spans 17–187; that stretch reads YGCSPEMYYQ…LTVTLQCVPQ (171 aa). Histidine 54 is subject to Pros-8alpha-FAD histidine. The chain crosses the membrane as a helical span at residues 251-273; the sequence is IGFYLLEFLLWTSTYLPRLVGWI.

Belongs to the oxygen-dependent FAD-linked oxidoreductase family. FAD is required as a cofactor. In terms of tissue distribution, highly expressed in liver.

The protein localises to the microsome membrane. It is found in the endoplasmic reticulum membrane. It catalyses the reaction L-gulono-1,4-lactone + O2 = L-ascorbate + H2O2 + H(+). The protein operates within cofactor biosynthesis; L-ascorbate biosynthesis via UDP-alpha-D-glucuronate pathway; L-ascorbate from UDP-alpha-D-glucuronate: step 4/4. In terms of biological role, oxidizes L-gulono-1,4-lactone to hydrogen peroxide and L-xylo-hexulonolactone which spontaneously isomerizes to L-ascorbate. The polypeptide is L-gulonolactone oxidase (Gulo) (Mus musculus (Mouse)).